Consider the following 494-residue polypeptide: Keratin, type I cytoskeletal 12 (494 aa).

Positions 1 to 12 are enriched in polar residues; that stretch reads MDLSNNTMSLSV. The segment at 1 to 32 is disordered; it reads MDLSNNTMSLSVRTPGLSRRLSSQSVIGRPRG. The head stretch occupies residues 1–124; the sequence is MDLSNNTMSL…GNDGGLLSGS (124 aa). Positions 125 to 160 are coil 1A; the sequence is EKETMQNLNDRLASYLDKVRALEEANTELENKIREW. The region spanning 125-440 is the IF rod domain; sequence EKETMQNLND…RLLDGEAQGD (316 aa). The segment at 164–182 is linker 1; it reads RGTGTADASQSDYSKYYPL. Residues 183–274 are coil 1B; it reads IEDLRNKIIS…KNHEDELQSF (92 aa). The linker 12 stretch occupies residues 275-297; it reads RVGGPGEVSVEMDAAPGVDLTRL. Positions 298-435 are coil 2; sequence LNDMRAQYET…IETYRRLLDG (138 aa). A tail region spans residues 436-494; it reads EAQGDGLEESLFVTDSKSQAQSTDSSKDPTKTRKIKTVVQEMVNGEVVSSQVQEIEELM. Positions 446-468 are disordered; it reads LFVTDSKSQAQSTDSSKDPTKTR. Polar residues predominate over residues 448 to 459; the sequence is VTDSKSQAQSTD.

It belongs to the intermediate filament family. In terms of assembly, heterotetramer of two type I and two type II keratins. Keratin-3 associates with keratin-12. In terms of tissue distribution, expressed in the corneal epithelium (at protein level).

Its function is as follows. Involved in corneal epithelium organization, integrity and corneal keratin expression. In Homo sapiens (Human), this protein is Keratin, type I cytoskeletal 12 (KRT12).